Consider the following 266-residue polypeptide: Glutamate racemase (266 aa).

Substrate is bound by residues 9–10 (DS) and 41–42 (YG). Residue cysteine 72 is the Proton donor/acceptor of the active site. A substrate-binding site is contributed by 73–74 (NT). Residue cysteine 184 is the Proton donor/acceptor of the active site. 185-186 (TH) provides a ligand contact to substrate.

This sequence belongs to the aspartate/glutamate racemases family.

It catalyses the reaction L-glutamate = D-glutamate. It functions in the pathway cell wall biogenesis; peptidoglycan biosynthesis. In terms of biological role, provides the (R)-glutamate required for cell wall biosynthesis. This is Glutamate racemase from Staphylococcus haemolyticus (strain JCSC1435).